A 167-amino-acid chain; its full sequence is Epithelial membrane protein 2 (167 aa).

Residues 1–21 traverse the membrane as a helical segment; the sequence is MLVLLAFIIAFHITSAALLFI. N-linked (GlcNAc...) asparagine glycans are attached at residues asparagine 44, asparagine 47, and asparagine 52. Helical transmembrane passes span 67–87, 95–115, and 143–163; these read TMIL…LQLF, FVLT…AASI, and YILA…YLIL.

Belongs to the PMP-22/EMP/MP20 family. Interacts with PTK2; regulates PTK2 activation and localization. Interacts with ITGB3; regulates the levels of the heterodimer ITGA5-ITGB3 integrin surface expression. Interacts with P2RX7 (via C-terminus). Interacts with ITGB1; the interaction may be direct or indirect and ITGB1 has a heterodimer form.

Its subcellular location is the golgi apparatus membrane. It is found in the cell membrane. The protein localises to the apical cell membrane. It localises to the membrane raft. The protein resides in the cytoplasm. Its subcellular location is the nucleus. It is found in the perinuclear region. In terms of biological role, functions as a key regulator of cell membrane composition by regulating protein surface expression. Also, plays a role in regulation of processes including cell migration, cell proliferation, cell contraction and cell adhesion. Regulates transepithelial migration of neutrophils into the alveolar lumen, potentially via mediation of cell surface expression of adhesion markers and lipid raft formation. Negatively regulates caveolae formation by reducing CAV1 expression and CAV1 amount by increasing lysosomal degradation. Facilitates surface trafficking and the formation of lipid rafts bearing GPI-anchor proteins. Regulates surface expression of MHC1 and ICAM1 proteins increasing susceptibility to T-cell mediated cytotoxicity. Regulates the plasma membrane expression of the integrin heterodimers ITGA6-ITGB1, ITGA5-ITGB3 and ITGA5-ITGB1 resulting in modulation of cell-matrix adhesion. Also regulates many processes through PTK2. Regulates blood vessel endothelial cell migration and angiogenesis by regulating VEGF protein expression through PTK2 activation. Regulates cell migration and cell contraction through PTK2 and SRC activation. Regulates focal adhesion density, F-actin conformation and cell adhesion capacity through interaction with PTK2. Positively regulates cell proliferation. Plays a role during cell death and cell blebbing. Promotes angiogenesis and vasculogenesis through induction of VEGFA via a HIF1A-dependent pathway. Also plays a role in embryo implantation by regulating surface trafficking of integrin heterodimer ITGA5-ITGB3. Plays a role in placental angiogenesis and uterine natural killer cell regulation at the maternal-fetal placental interface, however not required in the maternal tissues for a viable pregnancy. Involved in the early stages of embryogenic development and cardiogenesis, potentially via regulation of epithelial-mesenchymal transition timing. May play a role in glomerular filtration. In Pan troglodytes (Chimpanzee), this protein is Epithelial membrane protein 2 (EMP2).